A 418-amino-acid chain; its full sequence is Gamma-glutamyl phosphate reductase (418 aa).

Residues 1–18 (MAIQDEMRQVAEGAREAS) are compositionally biased toward basic and acidic residues. Residues 1 to 22 (MAIQDEMRQVAEGAREASRTLS) are disordered.

It belongs to the gamma-glutamyl phosphate reductase family.

It localises to the cytoplasm. It catalyses the reaction L-glutamate 5-semialdehyde + phosphate + NADP(+) = L-glutamyl 5-phosphate + NADPH + H(+). It participates in amino-acid biosynthesis; L-proline biosynthesis; L-glutamate 5-semialdehyde from L-glutamate: step 2/2. Catalyzes the NADPH-dependent reduction of L-glutamate 5-phosphate into L-glutamate 5-semialdehyde and phosphate. The product spontaneously undergoes cyclization to form 1-pyrroline-5-carboxylate. This chain is Gamma-glutamyl phosphate reductase, found in Syntrophus aciditrophicus (strain SB).